We begin with the raw amino-acid sequence, 176 residues long: Ribosome maturation factor RimM (176 aa).

Residues 96–176 (PEDEFYWRDL…QILVDWDPDF (81 aa)) form the PRC barrel domain.

Belongs to the RimM family. As to quaternary structure, binds ribosomal protein uS19.

The protein resides in the cytoplasm. Its function is as follows. An accessory protein needed during the final step in the assembly of 30S ribosomal subunit, possibly for assembly of the head region. Essential for efficient processing of 16S rRNA. May be needed both before and after RbfA during the maturation of 16S rRNA. It has affinity for free ribosomal 30S subunits but not for 70S ribosomes. This is Ribosome maturation factor RimM from Shewanella piezotolerans (strain WP3 / JCM 13877).